The following is a 366-amino-acid chain: Cobalt-precorrin-5B C(1)-methyltransferase (366 aa).

Belongs to the CbiD family.

The catalysed reaction is Co-precorrin-5B + S-adenosyl-L-methionine = Co-precorrin-6A + S-adenosyl-L-homocysteine. It functions in the pathway cofactor biosynthesis; adenosylcobalamin biosynthesis; cob(II)yrinate a,c-diamide from sirohydrochlorin (anaerobic route): step 6/10. In terms of biological role, catalyzes the methylation of C-1 in cobalt-precorrin-5B to form cobalt-precorrin-6A. This chain is Cobalt-precorrin-5B C(1)-methyltransferase, found in Paraburkholderia phymatum (strain DSM 17167 / CIP 108236 / LMG 21445 / STM815) (Burkholderia phymatum).